Reading from the N-terminus, the 95-residue chain is Co-chaperonin GroES (95 aa).

This sequence belongs to the GroES chaperonin family. As to quaternary structure, heptamer of 7 subunits arranged in a ring. Interacts with the chaperonin GroEL.

It is found in the cytoplasm. Functionally, together with the chaperonin GroEL, plays an essential role in assisting protein folding. The GroEL-GroES system forms a nano-cage that allows encapsulation of the non-native substrate proteins and provides a physical environment optimized to promote and accelerate protein folding. GroES binds to the apical surface of the GroEL ring, thereby capping the opening of the GroEL channel. This is Co-chaperonin GroES from Desulforapulum autotrophicum (strain ATCC 43914 / DSM 3382 / VKM B-1955 / HRM2) (Desulfobacterium autotrophicum).